Consider the following 614-residue polypeptide: Protein YehQ (614 aa).

2 consecutive SWIM-type zinc fingers follow at residues 55-89 (VRTQ…LSYQ) and 151-185 (SDVR…QAFV).

The sequence is that of Protein YehQ (yehQ) from Escherichia coli (strain K12).